Reading from the N-terminus, the 191-residue chain is Protein GrpE (191 aa).

The protein belongs to the GrpE family. As to quaternary structure, homodimer.

It localises to the cytoplasm. In terms of biological role, participates actively in the response to hyperosmotic and heat shock by preventing the aggregation of stress-denatured proteins, in association with DnaK and GrpE. It is the nucleotide exchange factor for DnaK and may function as a thermosensor. Unfolded proteins bind initially to DnaJ; upon interaction with the DnaJ-bound protein, DnaK hydrolyzes its bound ATP, resulting in the formation of a stable complex. GrpE releases ADP from DnaK; ATP binding to DnaK triggers the release of the substrate protein, thus completing the reaction cycle. Several rounds of ATP-dependent interactions between DnaJ, DnaK and GrpE are required for fully efficient folding. The sequence is that of Protein GrpE from Listeria welshimeri serovar 6b (strain ATCC 35897 / DSM 20650 / CCUG 15529 / CIP 8149 / NCTC 11857 / SLCC 5334 / V8).